The following is an 84-amino-acid chain: Toxin Tst1 (84 aa).

A signal peptide spans 1 to 19 (MKGMILFISCLLLIDIVVG). Positions 21 to 82 (KEGYLMDHEG…VWDRATNKCG (62 aa)) constitute an LCN-type CS-alpha/beta domain. Cystine bridges form between cysteine 31–cysteine 81, cysteine 35–cysteine 57, cysteine 43–cysteine 62, and cysteine 47–cysteine 64. A Cysteine amide modification is found at cysteine 81.

Expressed by the venom gland.

Its subcellular location is the secreted. Functionally, beta toxins bind voltage-independently at site-4 of sodium channels (Nav) and shift the voltage of activation toward more negative potentials thereby affecting sodium channel activation and promoting spontaneous and repetitive firing. This toxin is active only on mammals. Is toxic to mice. This chain is Toxin Tst1, found in Tityus stigmurus (Brazilian scorpion).